The following is a 439-amino-acid chain: Xylose isomerase (439 aa).

Catalysis depends on residues His101 and Asp104. Mg(2+)-binding residues include Glu232, Glu268, His271, Asp296, Asp307, Asp309, and Asp339.

The protein belongs to the xylose isomerase family. As to quaternary structure, homotetramer. It depends on Mg(2+) as a cofactor.

The protein resides in the cytoplasm. The catalysed reaction is alpha-D-xylose = alpha-D-xylulofuranose. In Yersinia enterocolitica serotype O:8 / biotype 1B (strain NCTC 13174 / 8081), this protein is Xylose isomerase.